The sequence spans 623 residues: Peptide transporter PTR2 (623 aa).

2 disordered regions span residues 1–20 and 31–58; these read MVSS…VLTD and DYED…TPQE. Transmembrane regions (helical) follow at residues 134 to 154, 163 to 183, 191 to 211, 250 to 270, 277 to 297, 385 to 405, 418 to 438, 448 to 468, 499 to 519, 529 to 549, and 557 to 577; these read ALTN…GYLG, AIQW…FASI, NAGL…SGLM, ITNV…ATSY, FWLA…FLFI, IIFN…IGAM, FNPL…YPLL, IWRI…GFVL, LFIL…ELAY, LVYA…LAIT, and LHWV…VMLA.

The protein belongs to the major facilitator superfamily. Proton-dependent oligopeptide transporter (POT/PTR) (TC 2.A.17) family.

The protein resides in the membrane. Its function is as follows. Uptake of small peptides. The chain is Peptide transporter PTR2 (PTR2) from Candida albicans (Yeast).